A 257-amino-acid polypeptide reads, in one-letter code: Hydroxyacylglutathione hydrolase (257 aa).

Zn(2+) is bound by residues H55, H57, D59, H60, H112, D129, and H167.

This sequence belongs to the metallo-beta-lactamase superfamily. Glyoxalase II family. Monomer. The cofactor is Zn(2+).

It carries out the reaction an S-(2-hydroxyacyl)glutathione + H2O = a 2-hydroxy carboxylate + glutathione + H(+). It participates in secondary metabolite metabolism; methylglyoxal degradation; (R)-lactate from methylglyoxal: step 2/2. Functionally, thiolesterase that catalyzes the hydrolysis of S-D-lactoyl-glutathione to form glutathione and D-lactic acid. The chain is Hydroxyacylglutathione hydrolase from Pseudoalteromonas translucida (strain TAC 125).